The chain runs to 201 residues: MLKELRPAFVVLIALTALTGLAYPLAMTGAAQVLFPRQANGSLVTREGTVIGSALIGQNFTSARYFHGRPSATTDADPADATKTIPAPYNAANSMGSNLGPTNPALADRVKADLDALRAENPRDPVPVDLVTASGSGLDPHISPEAALFQVPRVARARGLNEGVVRRLVEENVEDRTLGLLGEPRVNVLALNLALDKARPQ.

Residues 7–27 (PAFVVLIALTALTGLAYPLAM) traverse the membrane as a helical segment.

It belongs to the KdpC family. In terms of assembly, the system is composed of three essential subunits: KdpA, KdpB and KdpC.

It localises to the cell inner membrane. In terms of biological role, part of the high-affinity ATP-driven potassium transport (or Kdp) system, which catalyzes the hydrolysis of ATP coupled with the electrogenic transport of potassium into the cytoplasm. This subunit acts as a catalytic chaperone that increases the ATP-binding affinity of the ATP-hydrolyzing subunit KdpB by the formation of a transient KdpB/KdpC/ATP ternary complex. This Xanthobacter autotrophicus (strain ATCC BAA-1158 / Py2) protein is Potassium-transporting ATPase KdpC subunit.